An 80-amino-acid chain; its full sequence is Protein FAM229B (80 aa).

Residues 1–44 (MPFQFGTQPRRFPVEGGDSSIELEPGLSSSAACNGKEMSPTRQL) form a disordered region.

This sequence belongs to the FAM229 family.

This is Protein FAM229B (FAM229B) from Homo sapiens (Human).